Reading from the N-terminus, the 72-residue chain is Translation initiation factor IF-1 (72 aa).

Residues 1-72 (MTKEEAIEVD…SRGRIMFRER (72 aa)) form the S1-like domain.

Belongs to the IF-1 family. In terms of assembly, component of the 30S ribosomal translation pre-initiation complex which assembles on the 30S ribosome in the order IF-2 and IF-3, IF-1 and N-formylmethionyl-tRNA(fMet); mRNA recruitment can occur at any time during PIC assembly.

Its subcellular location is the cytoplasm. One of the essential components for the initiation of protein synthesis. Stabilizes the binding of IF-2 and IF-3 on the 30S subunit to which N-formylmethionyl-tRNA(fMet) subsequently binds. Helps modulate mRNA selection, yielding the 30S pre-initiation complex (PIC). Upon addition of the 50S ribosomal subunit IF-1, IF-2 and IF-3 are released leaving the mature 70S translation initiation complex. This chain is Translation initiation factor IF-1, found in Treponema pallidum (strain Nichols).